The following is a 274-amino-acid chain: Phosphatidylglycerol--prolipoprotein diacylglyceryl transferase (274 aa).

Helical transmembrane passes span 16–36 (VGLH…LSSF), 62–82 (FALG…VLFY), 94–114 (IIKI…LVIW), and 129–149 (LSVT…ALLI). Position 150 (R150) interacts with a 1,2-diacyl-sn-glycero-3-phospho-(1'-sn-glycerol). 3 consecutive transmembrane segments (helical) span residues 184 to 204 (VQLY…WLCY), 213 to 233 (GYSA…AEFF), and 247 to 267 (LTIG…ILWI).

This sequence belongs to the Lgt family.

The protein resides in the cell inner membrane. The enzyme catalyses L-cysteinyl-[prolipoprotein] + a 1,2-diacyl-sn-glycero-3-phospho-(1'-sn-glycerol) = an S-1,2-diacyl-sn-glyceryl-L-cysteinyl-[prolipoprotein] + sn-glycerol 1-phosphate + H(+). It functions in the pathway protein modification; lipoprotein biosynthesis (diacylglyceryl transfer). In terms of biological role, catalyzes the transfer of the diacylglyceryl group from phosphatidylglycerol to the sulfhydryl group of the N-terminal cysteine of a prolipoprotein, the first step in the formation of mature lipoproteins. This Chlamydia muridarum (strain MoPn / Nigg) protein is Phosphatidylglycerol--prolipoprotein diacylglyceryl transferase.